The chain runs to 594 residues: Serine/threonine-protein kinase UL13 homolog (594 aa).

Disordered regions lie at residues Met-1 to Cys-105 and Glu-128 to Arg-183. Over residues Arg-38–Ser-47 the composition is skewed to basic residues. The Protein kinase domain occupies Gly-223 to Pro-594. ATP-binding positions include Gly-229–Val-237 and Lys-248. The active-site Proton acceptor is Asp-349.

The protein belongs to the protein kinase superfamily. Ser/Thr protein kinase family. Post-translationally, autophosphorylated.

It is found in the virion tegument. Its subcellular location is the host nucleus. It catalyses the reaction L-seryl-[protein] + ATP = O-phospho-L-seryl-[protein] + ADP + H(+). The enzyme catalyses L-threonyl-[protein] + ATP = O-phospho-L-threonyl-[protein] + ADP + H(+). Multifunctional serine/threonine kinase that plays a role in several processes including egress of virus particles from the nucleus, modulation of the actin cytoskeleton and regulation of viral and cellular gene expression. Regulates the nuclear localization of viral envelopment factors UL34 and UL31 homologs, by phosphorylating the US3 kinase homolog, indicating a role in nuclear egress. Disrupts host nuclear lamins, including LMNA and LMNB1. Phosphorylates the viral Fc receptor composed of glycoproteins E (gE) and I (gI). Phosphorylation of glycoprotein E (gE) by UL13 homolog alters its subcellular localization, from the host early endosome to the plasma membrane. Participates in the transcriptional regulation of cellular and viral mRNAs mainly by phosphorylating the viral transcriptional regulator ICP22 homolog. The sequence is that of Serine/threonine-protein kinase UL13 homolog from Equus caballus (Horse).